Consider the following 592-residue polypeptide: Protein alan shepard (592 aa).

The segment at 1 to 68 is disordered; the sequence is MGGPHHQHQQ…ASVAAAPPTP (68 aa). Gly residues predominate over residues 18–28; sequence VGGGNGHGGGA. Over residues 36–54 the composition is skewed to polar residues; sequence PNSQQLPPQMPRSQNYANG. Positions 55-64 are enriched in low complexity; the sequence is SSSAASVAAA. Tyrosine 124 and tyrosine 140 each carry phosphotyrosine. The interval 162–224 is disordered; it reads PATTTYGQRV…AQNQNQQGGE (63 aa). The span at 176-224 shows a compositional bias: low complexity; that stretch reads SPSNTNSSSSSNTGSQSGTLSTSLSNTTNTNTTMGPNGTAQNQNQQGGE. RRM domains are found at residues 229–307 and 319–398; these read TNLY…IWVL and TNLY…FADG. The interval 565-592 is disordered; it reads PMTDSEQASTAASPDEAYTQYPHQAAPK.

Functionally, has a role in the perception of gravity. The polypeptide is Protein alan shepard (Drosophila mojavensis (Fruit fly)).